Reading from the N-terminus, the 758-residue chain is Maturase-like protein 2 (758 aa).

The protein resides in the plastid. Its subcellular location is the chloroplast. This Euglena gracilis protein is Maturase-like protein 2 (mat2).